Reading from the N-terminus, the 303-residue chain is uncharacterized protein (303 aa).

The signal sequence occupies residues 1–24 (MNRIALVFLYSLFLFNLAIGRVES). An N-linked (GlcNAc...) asparagine glycan is attached at Asn116. Positions 124–179 (FTRQQQKKSHDDDDDDDDSDSDESKEEEEKKKRDRKHRRDKRQAITQGSQNNTDPN) are disordered. Residues 135-149 (DDDDDDDSDSDESKE) show a composition bias toward acidic residues. A compositionally biased stretch (basic residues) spans 155-164 (KRDRKHRRDK). A compositionally biased stretch (polar residues) spans 167 to 178 (AITQGSQNNTDP).

This is an uncharacterized protein from Caenorhabditis elegans.